The chain runs to 512 residues: MTGFYFAAESSWSPYVILVLALAAMVANRLVRPKRPNDGLNHIPMLEFEDGDNSTERYIRDTWALLHAGYLKYTKRGMPFQMRNPADPDHPQVVLPAKYLSELKSAPESRFSFRLYSEQAFLLNYSHAPKQTDRTTHMVRTEMNKNMGALLEATQEEIEVALASKLPNSTAWEPATPYMALAYTTSRAIARVLGGRELSGSEEWIGMNVGVTGMTHQAAQQIREQYPPHLRWMARWRHPGARAVIATRRRSAQIVDPIIQKRLAGAQDTKPGEPDGIQWMLAAQGSRRPSAQEVADEQLFVGIASVHTTSATSLSILYDLLDRPNVAEEIIGEINAVAARHRDVGGRWTKQALSELEKLDSFMAESFRFNPVGLVTMQRSAVVDYVFQDGLRLPKHTQILFPTCEFNRDGDVHPNPDVFDPWRFLKMRKAGDPNKHHFAYVSDQMVGFGGGTHACPGRYFASYEIKLILIHMLTRYDIKWPDGLTRPPNMVHDFSNVPNFTATVLFRNKSKS.

Residues 5–27 (YFAAESSWSPYVILVLALAAMVA) form a helical membrane-spanning segment. Residues Asn53, Asn124, and Asn168 are each glycosylated (N-linked (GlcNAc...) asparagine). A heme-binding site is contributed by Cys455. Asn499 and Asn508 each carry an N-linked (GlcNAc...) asparagine glycan.

This sequence belongs to the cytochrome P450 family. Heme serves as cofactor.

It localises to the membrane. Its pathway is secondary metabolite biosynthesis. Cytochrome P450 monooxygenase; part of the gene cluster that mediates the biosynthesis of chaetoglobosin A which has a unique inhibitory activity against actin polymerization in mammalian cells. Chaetoglobosin A and its intermediates are involved in the morphological differentiation of C.globosum. The first step of the pathway is the synthesis of prochaetoglobosin I via condensation of one acetyl-CoA, 8 malonyl-CoA, and a L-tryptophan molecule by the PKS-NRPS hybrid synthetase cheA, followed by reduction of backbone double bond to install desired geometry by the enoyl reductase cheB. Further multiple oxidation steps performed by the cytochrome P450 monooxygenases cheE and cheG, as well as by the FAD-linked oxidoreductase cheF, lead to the formation of chaetoglobosin A. Depending on the order of action of these reductases, distinct intermediates can be identified. Within the pathway, the cytochrome P450 monooxygenase cheE catalyzes a stereospecific epoxidation on prochaetoglobosin I, cytoglobosin D, and chaetoglobosin J intermediates. The FAD-linked oxidoreductase cheF performs dehydrogenation of the C-20 hydroxyl groups in the 20-dihyrochaetoglobosin A and cytoglobosin D intermediates. Finally, the cytochrome P450 monooxygenase cheG can catalyze the stereospecific dihydroxylation of prochaetoglobosin I and prochaetoglobosin IV at C-19 and C-20, respectively. The Diels-Alderase cheD may play a role in the post-PKS-NRPS biosynthetic steps catalyzing Diels-Alder cyclization. This is Cytochrome P450 monooxygenase cheE from Chaetomium globosum (strain ATCC 6205 / CBS 148.51 / DSM 1962 / NBRC 6347 / NRRL 1970) (Soil fungus).